A 338-amino-acid chain; its full sequence is Glyceraldehyde-3-phosphate dehydrogenase (338 aa).

NAD(+) contacts are provided by residues 13 to 14, aspartate 35, and arginine 80; that span reads RI. D-glyceraldehyde 3-phosphate contacts are provided by residues 151–153, threonine 182, 211–212, and arginine 234; these read SCT and TG. Cysteine 152 functions as the Nucleophile in the catalytic mechanism. Position 316 (asparagine 316) interacts with NAD(+).

The protein belongs to the glyceraldehyde-3-phosphate dehydrogenase family. In terms of assembly, homotetramer.

It localises to the cytoplasm. The enzyme catalyses D-glyceraldehyde 3-phosphate + phosphate + NAD(+) = (2R)-3-phospho-glyceroyl phosphate + NADH + H(+). The protein operates within carbohydrate degradation; glycolysis; pyruvate from D-glyceraldehyde 3-phosphate: step 1/5. This Colletotrichum gloeosporioides (Anthracnose fungus) protein is Glyceraldehyde-3-phosphate dehydrogenase (GPDA).